A 384-amino-acid polypeptide reads, in one-letter code: Somatostatin receptor type 4 (384 aa).

The segment at 1 to 34 (MNTPATLPLGGEDTTWTPGINASWAPDEEEDAVR) is disordered. Residues 1-41 (MNTPATLPLGGEDTTWTPGINASWAPDEEEDAVRSDGTGTA) are Extracellular-facing. An N-linked (GlcNAc...) asparagine glycan is attached at Asn21. Residues 42–69 (GMVTIQCIYALVCLVGLVGNALVIFVIL) traverse the membrane as a helical segment. Topologically, residues 70-79 (RYAKMKTATN) are cytoplasmic. The chain crosses the membrane as a helical span at residues 80–105 (IYLLNLAVADELFMLSVPFVASAAAL). The Extracellular segment spans residues 106–116 (RHWPFGAVLCR). A disulfide bridge links Cys115 with Cys194. The helical transmembrane segment at 117-138 (AVLSVDGLNMFTSVFCLTVLSV) threads the bilayer. Topologically, residues 139–160 (DRYVAVVHPLRAATYRRPSVAK) are cytoplasmic. The helical transmembrane segment at 161-181 (LINLGVWLASLLVTLPIAVFA) threads the bilayer. The Extracellular portion of the chain corresponds to 182–203 (DTRPARGGEAVACNLHWPHPAW). A helical transmembrane segment spans residues 204–228 (SAVFVIYTFLLGFLLPVLAIGLCYL). Over 229-254 (LIVGKMRAVALRAGWQQRRRSEKKIT) the chain is Cytoplasmic. A helical membrane pass occupies residues 255–280 (RLVLMVVTVFVLCWMPFYVVQLLNLF). The Extracellular segment spans residues 281–287 (VTSLDAT). The chain crosses the membrane as a helical span at residues 288–311 (VNHVSLILSYANSCANPILYGFLS). Topologically, residues 312 to 384 (DNFRRSFQRV…RVPFTKTTTF (73 aa)) are cytoplasmic. A lipid anchor (S-palmitoyl cysteine) is attached at Cys323.

This sequence belongs to the G-protein coupled receptor 1 family. As to expression, brain, lung, heart and islets. Moderate levels in the hippocampus, cortex and olfactory bulb.

The protein localises to the cell membrane. In terms of biological role, receptor for somatostatin-14. The activity of this receptor is mediated by G proteins which inhibits adenylyl cyclase. It is functionally coupled not only to inhibition of adenylate cyclase, but also to activation of both arachidonate release and mitogen-activated protein (MAP) kinase cascade. This Rattus norvegicus (Rat) protein is Somatostatin receptor type 4 (Sstr4).